The chain runs to 97 residues: Co-chaperonin GroES (97 aa).

Belongs to the GroES chaperonin family. Heptamer of 7 subunits arranged in a ring. Interacts with the chaperonin GroEL.

Its subcellular location is the cytoplasm. Functionally, together with the chaperonin GroEL, plays an essential role in assisting protein folding. The GroEL-GroES system forms a nano-cage that allows encapsulation of the non-native substrate proteins and provides a physical environment optimized to promote and accelerate protein folding. GroES binds to the apical surface of the GroEL ring, thereby capping the opening of the GroEL channel. This Arthrobacter sp. (strain FB24) protein is Co-chaperonin GroES.